A 332-amino-acid chain; its full sequence is T-cell surface glycoprotein CD1c3 (332 aa).

The signal sequence occupies residues 1 to 17 (MLFLQFLFLDVVLGGSI). Residues 18 to 300 (TKNVVQENIS…IILYWGHGLS (283 aa)) are Extracellular-facing. Asn-25, Asn-38, Asn-75, and Asn-146 each carry an N-linked (GlcNAc...) asparagine glycan. 2 disulfides stabilise this stretch: Cys-120-Cys-184 and Cys-224-Cys-279. One can recognise an Ig-like domain in the interval 205–292 (PEVWLSSSPN…HSSLRDQDII (88 aa)). The chain crosses the membrane as a helical span at residues 301 to 321 (VILITFAVIVPLVLLIILVLL). The Cytoplasmic segment spans residues 322 to 332 (CKKCCTYQGIP).

Heterodimer with B2M (beta-2-microglobulin).

It localises to the cell membrane. Its subcellular location is the endosome membrane. Functionally, antigen-presenting protein that binds self and non-self lipid and glycolipid antigens and presents them to T-cell receptors on natural killer T-cells. The protein is T-cell surface glycoprotein CD1c3 (CD1C3) of Cavia porcellus (Guinea pig).